The primary structure comprises 658 residues: Staphylocoagulase (658 aa).

A signal peptide spans 1–26 (MKKQIISLGALAVASSLFTWDNKADA). Polar residues-rich tracts occupy residues 391–406 (MEQN…TQPT), 428–440 (GTES…QGES), 499–514 (PSET…QDGT), and 521–531 (PTQNKPSETNA). Positions 391–531 (MEQNRPSLSD…TQNKPSETNA (141 aa)) are disordered. Tandem repeats lie at residues 492–518 (ARPR…VSYG), 519–545 (ARPT…VSYG), 546–572 (ARPT…VSYG), 573–599 (ARPT…VSYG), 600–626 (ARPT…VSYG), and 627–653 (ARPT…ATYG). Residues 492-653 (ARPRFNKPSE…THADGTATYG (162 aa)) are 6 X 27 AA tandem repeats of A-R-P-[RT]-[FQY]-[NK]-K-P-S-[EK]-T-N-A-Y-N-V-T-T-[NH]-[QA]-[DN]-G-[TQ]-[VA]-[ST]-Y-G. Residues 619-658 (ANGQVSYGARPTQKKPSETNAYNVTTHADGTATYGPRVTK) form a disordered region. Polar residues predominate over residues 636–646 (ETNAYNVTTHA).

The protein belongs to the staphylocoagulase family.

Staphylocoagulase is an extracellular protein which specifically forms a complex with human prothrombin. This complex named staphylothrombin can clot fibrinogen without any proteolytic cleavage of prothrombin. This Staphylococcus aureus protein is Staphylocoagulase.